A 959-amino-acid chain; its full sequence is Translation initiation factor IF-2 (959 aa).

Over residues 1–10 the composition is skewed to basic and acidic residues; it reads MSDKTNDDKT. Residues 1–374 form a disordered region; the sequence is MSDKTNDDKT…SQMQETREKI (374 aa). A compositionally biased stretch (polar residues) spans 27–37; sequence EQSTVRQNFSH. Composition is skewed to low complexity over residues 63–118 and 128–138; these read AAAA…VTKP and QRPGGQQAQRP. 2 stretches are compositionally biased toward basic and acidic residues: residues 154-225 and 232-241; these read SEMD…EAAK and ARSERRDDAR. Over residues 246–284 the composition is skewed to low complexity; sequence GARPQQAGRPQGGRPQPAGRPQQGSPRPAPIIADAAPIA. A compositionally biased stretch (basic and acidic residues) spans 318-333; the sequence is PEVRAPKVVKGEDDRR. The tr-type G domain occupies 457 to 626; it reads SRPPVVTIMG…LLQAEMLDLK (170 aa). A G1 region spans residues 466–473; that stretch reads GHVDHGKT. 466–473 contributes to the GTP binding site; sequence GHVDHGKT. The tract at residues 491-495 is G2; the sequence is GITQH. Positions 512-515 are G3; sequence DTPG. Residues 512 to 516 and 566 to 569 each bind GTP; these read DTPGH and NKID. Residues 566–569 form a G4 region; sequence NKID. Positions 602–604 are G5; it reads SAK.

Belongs to the TRAFAC class translation factor GTPase superfamily. Classic translation factor GTPase family. IF-2 subfamily.

Its subcellular location is the cytoplasm. In terms of biological role, one of the essential components for the initiation of protein synthesis. Protects formylmethionyl-tRNA from spontaneous hydrolysis and promotes its binding to the 30S ribosomal subunits. Also involved in the hydrolysis of GTP during the formation of the 70S ribosomal complex. The sequence is that of Translation initiation factor IF-2 from Brucella suis biovar 1 (strain 1330).